We begin with the raw amino-acid sequence, 209 residues long: uncharacterized protein (209 aa).

Active-site charge relay system residues include serine 119 and histidine 160.

It belongs to the peptidase S51 family.

This is an uncharacterized protein from Listeria innocua serovar 6a (strain ATCC BAA-680 / CLIP 11262).